The following is an 881-amino-acid chain: Heat shock protein 70 homolog LHS1 (881 aa).

The signal sequence occupies residues 1-20; the sequence is MRNVLRLLFLTAFVAIGSLA. N-linked (GlcNAc...) asparagine glycans are attached at residues N128, N458, N474, N481, N489, N527, and N844. Over residues 833 to 844 the composition is skewed to basic and acidic residues; sequence RKLEQEKSRNNN. The segment at 833–881 is disordered; it reads RKLEQEKSRNNNETESTVINSADDKTTIVNDKTTESNPSSEEDILHDEL. Residues 859–871 are compositionally biased toward polar residues; that stretch reads TIVNDKTTESNPS. A compositionally biased stretch (acidic residues) spans 872-881; it reads SEEDILHDEL. The Prevents secretion from ER motif lies at 878 to 881; the sequence is HDEL.

It belongs to the heat shock protein 70 family. In terms of assembly, interacts with the heat shock protein 70 (HSP70) KAR2, and this stimulates nucleotide exchange on KAR2. KAR2 in turn acts to stimulate the ATPase activity of LHS1. Post-translationally, N-glycosylated.

It is found in the endoplasmic reticulum lumen. The catalysed reaction is ATP + H2O = ADP + phosphate + H(+). In terms of biological role, chaperone required for protein translocation and folding in the endoplasmic reticulum. The sequence is that of Heat shock protein 70 homolog LHS1 (LHS1) from Saccharomyces cerevisiae (strain ATCC 204508 / S288c) (Baker's yeast).